Consider the following 261-residue polypeptide: Cytochrome c oxidase subunit 3 (261 aa).

The Mitochondrial matrix portion of the chain corresponds to 1-15 (MAHQAHSYHMVDPSP). The chain crosses the membrane as a helical span at residues 16–34 (WPIFGAITALLTTSGLIMW). Over 35-40 (FHYNSI) the chain is Mitochondrial intermembrane. Residues 41–66 (ALLTAGLLSMLLVMIQWWRDVVREST) form a helical membrane-spanning segment. Residues 67 to 72 (FQGHHT) lie on the Mitochondrial matrix side of the membrane. A helical membrane pass occupies residues 73–105 (PTVQKGLRYGMILFITSEAFFFLGFFWAFFHSS). The Mitochondrial intermembrane portion of the chain corresponds to 106–128 (LAPTPELGGQWPPTGIKPLNPLE). A helical transmembrane segment spans residues 129–152 (VPLLNTAILLASGVTVTWAHHSIT). The Mitochondrial matrix segment spans residues 153–155 (EGN). The helical transmembrane segment at 156-183 (RKQAIHALTLTILLGFYFTALQAMEYHE) threads the bilayer. Residues 184–190 (ASFSIAD) lie on the Mitochondrial intermembrane side of the membrane. The helical transmembrane segment at 191 to 223 (SVYGSTFFVATGFHGLHVIIGSSFLTICLLRLI) threads the bilayer. The Mitochondrial matrix portion of the chain corresponds to 224-232 (KFHFTSNHH). A helical transmembrane segment spans residues 233–256 (FGFEAAAWYWHFVDIIWLFLYMSM). At 257 to 261 (YWWGS) the chain is on the mitochondrial intermembrane side.

It belongs to the cytochrome c oxidase subunit 3 family. In terms of assembly, component of the cytochrome c oxidase (complex IV, CIV), a multisubunit enzyme composed of 14 subunits. The complex is composed of a catalytic core of 3 subunits MT-CO1, MT-CO2 and MT-CO3, encoded in the mitochondrial DNA, and 11 supernumerary subunits COX4I, COX5A, COX5B, COX6A, COX6B, COX6C, COX7A, COX7B, COX7C, COX8 and NDUFA4, which are encoded in the nuclear genome. The complex exists as a monomer or a dimer and forms supercomplexes (SCs) in the inner mitochondrial membrane with NADH-ubiquinone oxidoreductase (complex I, CI) and ubiquinol-cytochrome c oxidoreductase (cytochrome b-c1 complex, complex III, CIII), resulting in different assemblies (supercomplex SCI(1)III(2)IV(1) and megacomplex MCI(2)III(2)IV(2)).

It is found in the mitochondrion inner membrane. The catalysed reaction is 4 Fe(II)-[cytochrome c] + O2 + 8 H(+)(in) = 4 Fe(III)-[cytochrome c] + 2 H2O + 4 H(+)(out). Its function is as follows. Component of the cytochrome c oxidase, the last enzyme in the mitochondrial electron transport chain which drives oxidative phosphorylation. The respiratory chain contains 3 multisubunit complexes succinate dehydrogenase (complex II, CII), ubiquinol-cytochrome c oxidoreductase (cytochrome b-c1 complex, complex III, CIII) and cytochrome c oxidase (complex IV, CIV), that cooperate to transfer electrons derived from NADH and succinate to molecular oxygen, creating an electrochemical gradient over the inner membrane that drives transmembrane transport and the ATP synthase. Cytochrome c oxidase is the component of the respiratory chain that catalyzes the reduction of oxygen to water. Electrons originating from reduced cytochrome c in the intermembrane space (IMS) are transferred via the dinuclear copper A center (CU(A)) of subunit 2 and heme A of subunit 1 to the active site in subunit 1, a binuclear center (BNC) formed by heme A3 and copper B (CU(B)). The BNC reduces molecular oxygen to 2 water molecules using 4 electrons from cytochrome c in the IMS and 4 protons from the mitochondrial matrix. The sequence is that of Cytochrome c oxidase subunit 3 (MT-CO3) from Coturnix japonica (Japanese quail).